A 264-amino-acid polypeptide reads, in one-letter code: SPRY domain-containing SOCS box protein 2 (264 aa).

Polar residues predominate over residues 1–19 (MGQTALARGSSSTPTSQAL). The tract at residues 1–34 (MGQTALARGSSSTPTSQALYSDFSPPEGLEELLS) is disordered. The region spanning 26–221 (PEGLEELLSA…VRIRYMGERR (196 aa)) is the B30.2/SPRY domain. In terms of domain architecture, SOCS box spans 222–264 (VEEPQSLLHLSRLCVRHALGDTRLGQISTLPLPPAMKRYLLYK).

This sequence belongs to the SPSB family. In terms of assembly, component of the probable ECS(SPSB2) E3 ubiquitin-protein ligase complex which contains CUL5, RNF7/RBX2, Elongin BC complex and SPSB2. Interacts with CUL5, RNF7, ELOB and ELOC. Interacts with MET. Interacts (via B30.2/SPRY domain) with PAWR; this interaction occurs in association with the Elongin BC complex. Interacts with NOS2.

The protein resides in the cytoplasm. The protein localises to the cytosol. The protein operates within protein modification; protein ubiquitination. Its function is as follows. Substrate recognition component of a SCF-like ECS (Elongin BC-CUL2/5-SOCS-box protein) E3 ubiquitin-protein ligase complex which mediates the ubiquitination and subsequent proteasomal degradation of target proteins. Negatively regulates nitric oxide (NO) production and limits cellular toxicity in activated macrophages by mediating the ubiquitination and proteasomal degradation of NOS2. Acts as a bridge which links NOS2 with the ECS E3 ubiquitin ligase complex components ELOC and CUL5. The polypeptide is SPRY domain-containing SOCS box protein 2 (Spsb2) (Mus musculus (Mouse)).